Here is a 600-residue protein sequence, read N- to C-terminus: Jacalin-related lectin 18 (600 aa).

Jacalin-type lectin domains are found at residues 12-158, 161-303, 304-447, and 454-597; these read TQRL…YFTC, PTRM…YFTT, SPFI…YFRL, and GEKV…HVLP.

The protein belongs to the jacalin lectin family.

The chain is Jacalin-related lectin 18 (JAL18) from Arabidopsis thaliana (Mouse-ear cress).